Reading from the N-terminus, the 172-residue chain is Small ribosomal subunit protein uS5 (172 aa).

In terms of domain architecture, S5 DRBM spans 15 to 78 (YIEKLVNIRR…DKARKRMKSV (64 aa)).

The protein belongs to the universal ribosomal protein uS5 family. Part of the 30S ribosomal subunit. Contacts proteins S4 and S8.

With S4 and S12 plays an important role in translational accuracy. Its function is as follows. Located at the back of the 30S subunit body where it stabilizes the conformation of the head with respect to the body. The protein is Small ribosomal subunit protein uS5 of Ruthia magnifica subsp. Calyptogena magnifica.